The primary structure comprises 72 residues: Translation initiation factor IF-1 (72 aa).

In terms of domain architecture, S1-like spans 2–72 (AKEDCIEMQG…SKGRIIFRSR (71 aa)).

This sequence belongs to the IF-1 family. Component of the 30S ribosomal translation pre-initiation complex which assembles on the 30S ribosome in the order IF-2 and IF-3, IF-1 and N-formylmethionyl-tRNA(fMet); mRNA recruitment can occur at any time during PIC assembly.

The protein resides in the cytoplasm. Functionally, one of the essential components for the initiation of protein synthesis. Stabilizes the binding of IF-2 and IF-3 on the 30S subunit to which N-formylmethionyl-tRNA(fMet) subsequently binds. Helps modulate mRNA selection, yielding the 30S pre-initiation complex (PIC). Upon addition of the 50S ribosomal subunit IF-1, IF-2 and IF-3 are released leaving the mature 70S translation initiation complex. In Haemophilus influenzae (strain ATCC 51907 / DSM 11121 / KW20 / Rd), this protein is Translation initiation factor IF-1.